The following is a 260-amino-acid chain: Hydroxyethylthiazole kinase (260 aa).

R126 and S172 together coordinate ATP. G199 lines the substrate pocket.

It belongs to the Thz kinase family. Mg(2+) is required as a cofactor.

It carries out the reaction 5-(2-hydroxyethyl)-4-methylthiazole + ATP = 4-methyl-5-(2-phosphooxyethyl)-thiazole + ADP + H(+). It functions in the pathway cofactor biosynthesis; thiamine diphosphate biosynthesis; 4-methyl-5-(2-phosphoethyl)-thiazole from 5-(2-hydroxyethyl)-4-methylthiazole: step 1/1. Its function is as follows. Catalyzes the phosphorylation of the hydroxyl group of 4-methyl-5-beta-hydroxyethylthiazole (THZ). This Burkholderia thailandensis (strain ATCC 700388 / DSM 13276 / CCUG 48851 / CIP 106301 / E264) protein is Hydroxyethylthiazole kinase.